The sequence spans 648 residues: Serine/threonine-protein phosphatase 1 regulatory subunit PIG1 (648 aa).

Low complexity predominate over residues 20–51; sequence STSSFVSSTTSNSFSPLEDSTSASSSTSSSSS. Residues 20 to 52 form a disordered region; the sequence is STSSFVSSTTSNSFSPLEDSTSASSSTSSSSSG. In terms of domain architecture, CBM21 spans 201–331; it reads HSLELSDPVS…NNDYKNYEIT (131 aa). Residues 593-609 show a composition bias toward polar residues; that stretch reads RESSSPEISPLNTTTSL. The segment at 593-629 is disordered; that stretch reads RESSSPEISPLNTTTSLPFFPGDNMSDSSGEYEERTS.

In terms of biological role, regulates the activity of glycogen synthase. It is most probably a regulatory subunit for protein phosphatase type 1. This chain is Serine/threonine-protein phosphatase 1 regulatory subunit PIG1 (PIG1), found in Saccharomyces cerevisiae (strain ATCC 204508 / S288c) (Baker's yeast).